A 367-amino-acid polypeptide reads, in one-letter code: tRNA/tmRNA (uracil-C(5))-methyltransferase (367 aa).

S-adenosyl-L-methionine-binding residues include Q190, Y218, N223, E239, and D299. C324 (nucleophile) is an active-site residue. The active-site Proton acceptor is E358.

This sequence belongs to the class I-like SAM-binding methyltransferase superfamily. RNA M5U methyltransferase family. TrmA subfamily.

The enzyme catalyses uridine(54) in tRNA + S-adenosyl-L-methionine = 5-methyluridine(54) in tRNA + S-adenosyl-L-homocysteine + H(+). The catalysed reaction is uridine(341) in tmRNA + S-adenosyl-L-methionine = 5-methyluridine(341) in tmRNA + S-adenosyl-L-homocysteine + H(+). Dual-specificity methyltransferase that catalyzes the formation of 5-methyluridine at position 54 (m5U54) in all tRNAs, and that of position 341 (m5U341) in tmRNA (transfer-mRNA). This is tRNA/tmRNA (uracil-C(5))-methyltransferase from Erwinia tasmaniensis (strain DSM 17950 / CFBP 7177 / CIP 109463 / NCPPB 4357 / Et1/99).